A 177-amino-acid polypeptide reads, in one-letter code: Probable nicotinate-nucleotide adenylyltransferase (177 aa).

Belongs to the NadD family.

The enzyme catalyses nicotinate beta-D-ribonucleotide + ATP + H(+) = deamido-NAD(+) + diphosphate. The protein operates within cofactor biosynthesis; NAD(+) biosynthesis; deamido-NAD(+) from nicotinate D-ribonucleotide: step 1/1. Functionally, catalyzes the reversible adenylation of nicotinate mononucleotide (NaMN) to nicotinic acid adenine dinucleotide (NaAD). The protein is Probable nicotinate-nucleotide adenylyltransferase of Nitratiruptor sp. (strain SB155-2).